A 59-amino-acid chain; its full sequence is uncharacterized protein (59 aa).

Residues 1–17 (MIASIWYAELGCASAIA) form the signal peptide.

This is an uncharacterized protein from Rickettsia prowazekii (strain Madrid E).